The primary structure comprises 486 residues: Uridine/cytidine kinase UKL1, chloroplastic (486 aa).

The N-terminal 47 residues, 1-47 (MPEDSSSLDYAMEKASGPHFSGLRFDGLLSSSPPNSSVVSSLRSAVS), are a transit peptide targeting the chloroplast. Residues 31–54 (SSPPNSSVVSSLRSAVSSSSPSSS) show a composition bias toward low complexity. The segment at 31–67 (SSPPNSSVVSSLRSAVSSSSPSSSDPEAPKQPFIIGV) is disordered. The tract at residues 59-264 (PKQPFIIGVS…ITQHIHTKLG (206 aa)) is uridine kinase. The interval 274-486 (NVYVIQSTFQ…RYFGTDEEDQ (213 aa)) is uracil phosphoribosyltransferase. Residues Lys-298, Arg-307, and 341-344 (CKKL) contribute to the GTP site. 5-phospho-alpha-D-ribose 1-diphosphate is bound by residues Arg-351 and Arg-376. Arg-396 is a GTP binding site. 5-phospho-alpha-D-ribose 1-diphosphate is bound by residues Asp-402, 407–410 (TGNS), and Glu-473. 472 to 474 (GEF) contacts uracil.

This sequence in the N-terminal section; belongs to the uridine kinase family. In the C-terminal section; belongs to the UPRTase family. As to expression, expressed in roots, leaves and stems.

Its subcellular location is the plastid. The protein localises to the chloroplast. It is found in the cytoplasm. It carries out the reaction cytidine + ATP = CMP + ADP + H(+). The catalysed reaction is uridine + ATP = UMP + ADP + H(+). The protein operates within pyrimidine metabolism; CTP biosynthesis via salvage pathway; CTP from cytidine: step 1/3. It functions in the pathway pyrimidine metabolism; UMP biosynthesis via salvage pathway; UMP from uridine: step 1/1. Functionally, involved in the pyrimidine salvage pathway. Phosphorylates uridine to uridine monophosphate (UMP). Phosphorylates cytidine to cytidine monophosphate (CMP). Does not possess uracil phosphoribosyltransferase (UPRTase) activity that catalyzes the conversion of uracil and 5-phospho-alpha-D-ribose 1-diphosphate (PRPP) to UMP and diphosphate. The chain is Uridine/cytidine kinase UKL1, chloroplastic from Arabidopsis thaliana (Mouse-ear cress).